A 300-amino-acid polypeptide reads, in one-letter code: Ribonuclease HIII (300 aa).

The RNase H type-2 domain maps to 83-300 (IPIIGSDEVG…THKAQALLTK (218 aa)). A divalent metal cation is bound by residues D89, E90, and D194.

This sequence belongs to the RNase HII family. RnhC subfamily. Requires Mn(2+) as cofactor. The cofactor is Mg(2+).

The protein resides in the cytoplasm. The catalysed reaction is Endonucleolytic cleavage to 5'-phosphomonoester.. Functionally, endonuclease that specifically degrades the RNA of RNA-DNA hybrids. The chain is Ribonuclease HIII from Streptococcus pyogenes serotype M3 (strain ATCC BAA-595 / MGAS315).